Here is a 317-residue protein sequence, read N- to C-terminus: L-lactate dehydrogenase (317 aa).

Residues V16, D37, and Y68 each coordinate NAD(+). Substrate contacts are provided by residues Q85, R91, 123–126 (NPCD), and 151–154 (DSAR). An NAD(+)-binding site is contributed by 121 to 123 (ASN). H178 functions as the Proton acceptor in the catalytic mechanism. Phosphotyrosine is present on Y222. Position 231 (T231) interacts with substrate.

It belongs to the LDH/MDH superfamily. LDH family. In terms of assembly, homotetramer.

The protein resides in the cytoplasm. The catalysed reaction is (S)-lactate + NAD(+) = pyruvate + NADH + H(+). It functions in the pathway fermentation; pyruvate fermentation to lactate; (S)-lactate from pyruvate: step 1/1. In terms of biological role, catalyzes the conversion of lactate to pyruvate. The protein is L-lactate dehydrogenase of Mesoplasma florum (strain ATCC 33453 / NBRC 100688 / NCTC 11704 / L1) (Acholeplasma florum).